The chain runs to 182 residues: ATP synthase subunit delta (182 aa).

It belongs to the ATPase delta chain family. F-type ATPases have 2 components, F(1) - the catalytic core - and F(0) - the membrane proton channel. F(1) has five subunits: alpha(3), beta(3), gamma(1), delta(1), epsilon(1). F(0) has three main subunits: a(1), b(2) and c(10-14). The alpha and beta chains form an alternating ring which encloses part of the gamma chain. F(1) is attached to F(0) by a central stalk formed by the gamma and epsilon chains, while a peripheral stalk is formed by the delta and b chains.

The protein localises to the cell inner membrane. In terms of biological role, f(1)F(0) ATP synthase produces ATP from ADP in the presence of a proton or sodium gradient. F-type ATPases consist of two structural domains, F(1) containing the extramembraneous catalytic core and F(0) containing the membrane proton channel, linked together by a central stalk and a peripheral stalk. During catalysis, ATP synthesis in the catalytic domain of F(1) is coupled via a rotary mechanism of the central stalk subunits to proton translocation. Functionally, this protein is part of the stalk that links CF(0) to CF(1). It either transmits conformational changes from CF(0) to CF(1) or is implicated in proton conduction. The polypeptide is ATP synthase subunit delta (Pseudothermotoga lettingae (strain ATCC BAA-301 / DSM 14385 / NBRC 107922 / TMO) (Thermotoga lettingae)).